The primary structure comprises 141 residues: HTH-type transcriptional repressor NsrR (141 aa).

The 128-residue stretch at 2–129 folds into the HTH rrf2-type domain; that stretch reads QLTNFTDFGL…DQHTIQDMLT (128 aa). A DNA-binding region (H-T-H motif) is located at residues 28 to 51; it reads ITVVTETFDVSRNHMVKIINKLGQ. [2Fe-2S] cluster is bound by residues Cys91, Cys96, and Cys102.

Requires [2Fe-2S] cluster as cofactor.

Its function is as follows. Nitric oxide-sensitive repressor of genes involved in protecting the cell against nitrosative stress. May require iron for activity. The sequence is that of HTH-type transcriptional repressor NsrR from Aliivibrio salmonicida (strain LFI1238) (Vibrio salmonicida (strain LFI1238)).